We begin with the raw amino-acid sequence, 124 residues long: Translation initiation factor 5A (124 aa).

The segment at 27–53 (TSYSTSKPGKHGSAKARVEGTGVFDGQ) is disordered. K36 bears the Hypusine mark.

This sequence belongs to the eIF-5A family.

Its subcellular location is the cytoplasm. Functions by promoting the formation of the first peptide bond. This Natronomonas pharaonis (strain ATCC 35678 / DSM 2160 / CIP 103997 / JCM 8858 / NBRC 14720 / NCIMB 2260 / Gabara) (Halobacterium pharaonis) protein is Translation initiation factor 5A.